We begin with the raw amino-acid sequence, 317 residues long: Apolipoprotein E (317 aa).

Positions 1 to 18 (MKVLWAALLVTFLAGCQA) are cleaved as a signal peptide. 8 tandem repeats follow at residues 80–101 (ALMDETMKELKAYKSELEEQLT), 102–123 (PVAEETRARLSKELQAAQARLG), 124–145 (ADMEDVRGRLVQYRGEVQAMLG), 146–167 (QSTEELRARLASHLRKLRKRLL), 168–189 (RDADDLQKRLAVYQAGAREGAE), 190–211 (RGVSAIRERLGPLVEQGRVRAA), 212–233 (TVGSLAGQPLQERAQAWGERLR), and 234–255 (ARMEEMGSRTRDRLDEVKEQVA). An 8 X 22 AA approximate tandem repeats region spans residues 80-255 (ALMDETMKEL…RLDEVKEQVA (176 aa)). At M143 the chain carries Methionine sulfoxide. S147 carries the phosphoserine modification. The LDL and other lipoprotein receptors binding stretch occupies residues 158–168 (HLRKLRKRLLR). Residue 162–165 (LRKR) participates in heparin binding. A lipid-binding and lipoprotein association region spans residues 210–290 (AATVGSLAGQ…SWFEPLVEDM (81 aa)). 229–236 (GERLRARM) is a heparin binding site. The homooligomerization stretch occupies residues 266-317 (QQIRLQAEAFQARLKSWFEPLVEDMQRQWAGLVEKVQAAMGTSAAPVPSDNH). Residues 278–290 (RLKSWFEPLVEDM) are specificity for association with VLDL.

This sequence belongs to the apolipoprotein A1/A4/E family. Homotetramer. May interact with ABCA1; functionally associated with ABCA1 in the biogenesis of HDLs. May interact with APP/A4 amyloid-beta peptide; the interaction is extremely stable in vitro but its physiological significance is unclear. May interact with MAPT. May interact with MAP2. In the cerebrospinal fluid, interacts with secreted SORL1. Interacts with PMEL; this allows the loading of PMEL luminal fragment on ILVs to induce fibril nucleation. In terms of processing, APOE exists as multiple glycosylated and sialylated glycoforms within cells and in plasma. The extent of glycosylation and sialylation are tissue and context specific. Post-translationally, glycated in plasma VLDL. Phosphorylated by FAM20C in the extracellular medium.

Its subcellular location is the secreted. It is found in the extracellular space. The protein localises to the extracellular matrix. The protein resides in the extracellular vesicle. It localises to the endosome. Its subcellular location is the multivesicular body. In terms of biological role, APOE is an apolipoprotein, a protein associating with lipid particles, that mainly functions in lipoprotein-mediated lipid transport between organs via the plasma and interstitial fluids. APOE is a core component of plasma lipoproteins and is involved in their production, conversion and clearance. Apolipoproteins are amphipathic molecules that interact both with lipids of the lipoprotein particle core and the aqueous environment of the plasma. As such, APOE associates with chylomicrons, chylomicron remnants, very low density lipoproteins (VLDL) and intermediate density lipoproteins (IDL) but shows a preferential binding to high-density lipoproteins (HDL). It also binds a wide range of cellular receptors including the LDL receptor/LDLR, the LDL receptor-related proteins LRP1, LRP2 and LRP8 and the very low-density lipoprotein receptor/VLDLR that mediate the cellular uptake of the APOE-containing lipoprotein particles. Finally, APOE also has a heparin-binding activity and binds heparan-sulfate proteoglycans on the surface of cells, a property that supports the capture and the receptor-mediated uptake of APOE-containing lipoproteins by cells. A main function of APOE is to mediate lipoprotein clearance through the uptake of chylomicrons, VLDLs, and HDLs by hepatocytes. APOE is also involved in the biosynthesis by the liver of VLDLs as well as their uptake by peripheral tissues ensuring the delivery of triglycerides and energy storage in muscle, heart and adipose tissues. By participating in the lipoprotein-mediated distribution of lipids among tissues, APOE plays a critical role in plasma and tissues lipid homeostasis. APOE is also involved in two steps of reverse cholesterol transport, the HDLs-mediated transport of cholesterol from peripheral tissues to the liver, and thereby plays an important role in cholesterol homeostasis. First, it is functionally associated with ABCA1 in the biogenesis of HDLs in tissues. Second, it is enriched in circulating HDLs and mediates their uptake by hepatocytes. APOE also plays an important role in lipid transport in the central nervous system, regulating neuron survival and sprouting. This chain is Apolipoprotein E (APOE), found in Pan troglodytes (Chimpanzee).